Consider the following 520-residue polypeptide: Peptidoglycan-recognition protein LC (520 aa).

Polar residues-rich tracts occupy residues 1–14 and 27–36; these read MPFS…QCSN and KNCSTSSTDS. Disordered stretches follow at residues 1 to 78 and 239 to 278; these read MPFS…RISV and DKWK…AQTP. The Cytoplasmic segment spans residues 1–291; the sequence is MPFSNETEMS…PFLPNTVGRK (291 aa). 2 stretches are compositionally biased toward basic and acidic residues: residues 48 to 58 and 66 to 78; these read RPEKETKDRGT and KSEE…RISV. A helical; Signal-anchor for type II membrane protein transmembrane segment spans residues 292 to 312; it reads AVTVTVVFVTLTFLLGIVLAT. At 313-520 the chain is on the extracellular side; the sequence is TTNLFGKTLN…ASFANWTHWS (208 aa). N389 carries an N-linked (GlcNAc...) asparagine glycan. A disulfide bridge connects residues C390 and C396. In terms of domain architecture, N-acetylmuramoyl-L-alanine amidase spans 412–490; that stretch reads QKCDIAYNFL…KLGKIAPSYR (79 aa). N-linked (GlcNAc...) asparagine glycosylation is present at N515.

It belongs to the N-acetylmuramoyl-L-alanine amidase 2 family. In terms of processing, proteolytically cleaved, probably by a metaloprotease such as Mmp2; proteolytic cleavage leads to activation of the imd/Relish signaling pathway. Expressed in the fat body and hemocytes.

The protein localises to the membrane. With respect to regulation, activated by proteolytic cleavage in response to Gram-negative bacterial infection; cleavage may be mediated by endogenous proteases, such as the metalloprotease Mmp2 or elastase, or by bacterially expressed proteases such as the surface serine protease OmpT. In terms of biological role, major activator of the imd/Relish pathway and is likely to encode a pattern recognition molecule for the humoral immune response. Required for Relish processing and nuclear translocation following proteolytic cleavage. Involved in the response to lipopolysaccharide (LPS) and peptidoglycan of Gram-negative bacteria. The different isoforms probably display different recognition capabilities to various microbial patterns. Functionally, mediates the response to LPS and Gram-negative bacteria. Its function is as follows. Mediates the response to LPS, peptidoglycan and Gram-negative bacteria. This Drosophila melanogaster (Fruit fly) protein is Peptidoglycan-recognition protein LC (PGRP-LC).